The primary structure comprises 242 residues: AA9 family lytic polysaccharide monooxygenase F (242 aa).

A signal peptide spans 1-20; sequence MVQFKLSTASLLALASYAAA. Histidine 21 is a binding site for Cu(2+). The disordered stretch occupies residues 31-53; the sequence is GQTYPGADPHNPNPESPGWQAEN. Cystine bridges form between cysteine 71–cysteine 192 and cysteine 112–cysteine 116. Histidine 101 is a binding site for Cu(2+). O2-binding residues include histidine 178 and glutamine 187. Position 189 (tyrosine 189) interacts with Cu(2+).

It belongs to the polysaccharide monooxygenase AA9 family. Cu(2+) serves as cofactor.

It is found in the secreted. The enzyme catalyses [(1-&gt;4)-beta-D-glucosyl]n+m + reduced acceptor + O2 = 4-dehydro-beta-D-glucosyl-[(1-&gt;4)-beta-D-glucosyl]n-1 + [(1-&gt;4)-beta-D-glucosyl]m + acceptor + H2O.. Its function is as follows. Lytic polysaccharide monooxygenase (LPMO) that depolymerizes crystalline and amorphous polysaccharides via the oxidation of scissile alpha- or beta-(1-4)-glycosidic bonds, yielding C1 or C4 oxidation products. Catalysis by LPMOs requires the reduction of the active-site copper from Cu(II) to Cu(I) by a reducing agent and H(2)O(2) or O(2) as a cosubstrate. Active on hemicelluloses, including xylan, glucomannan, and xyloglucan. Shows clear activity on cellooligosaccharides, generating C4 oxidation products. Has no activity on ivory nut mannan (INM), a linear beta-1,4-linked mannan without substitutions. The chain is AA9 family lytic polysaccharide monooxygenase F from Malbranchea cinnamomea (Thermophilic fungus).